The primary structure comprises 102 residues: A-type ATP synthase subunit F (102 aa).

This sequence belongs to the V-ATPase F subunit family. In terms of assembly, has multiple subunits with at least A(3), B(3), C, D, E, F, H, I and proteolipid K(x).

The protein resides in the cell membrane. Component of the A-type ATP synthase that produces ATP from ADP in the presence of a proton gradient across the membrane. This is A-type ATP synthase subunit F from Thermococcus kodakarensis (strain ATCC BAA-918 / JCM 12380 / KOD1) (Pyrococcus kodakaraensis (strain KOD1)).